The sequence spans 347 residues: Phenylalanine--tRNA ligase alpha subunit (347 aa).

Glu-262 lines the Mg(2+) pocket.

This sequence belongs to the class-II aminoacyl-tRNA synthetase family. Phe-tRNA synthetase alpha subunit type 1 subfamily. As to quaternary structure, tetramer of two alpha and two beta subunits. The cofactor is Mg(2+).

The protein resides in the cytoplasm. It catalyses the reaction tRNA(Phe) + L-phenylalanine + ATP = L-phenylalanyl-tRNA(Phe) + AMP + diphosphate + H(+). The polypeptide is Phenylalanine--tRNA ligase alpha subunit (Roseiflexus castenholzii (strain DSM 13941 / HLO8)).